The sequence spans 624 residues: Phosphatidylinositol 4-kinase lsb6 (624 aa).

A compositionally biased stretch (polar residues) spans 1–31 (MESTFHSDTLDSFPNYQENSLNTNEEQTNPL). Residues 1-53 (MESTFHSDTLDSFPNYQENSLNTNEEQTNPLESLRDGWASSNSSSSSSLLLPD) form a disordered region. Low complexity predominate over residues 40-51 (SSNSSSSSSLLL). Positions 145–520 (GVFPVLISKG…LLELPNLYVV (376 aa)) constitute a PI3K/PI4K catalytic domain. The segment at 151–157 (ISKGSSG) is G-loop. A catalytic loop region spans residues 346 to 354 (RNTDRNLDN). Positions 409 to 429 (AIDNSLAFPYKHPDSWRSFPY) are activation loop.

It belongs to the PI3/PI4-kinase family. Requires Mg(2+) as cofactor. Mn(2+) is required as a cofactor.

The protein localises to the cell membrane. The protein resides in the vacuole membrane. It localises to the golgi apparatus membrane. The enzyme catalyses a 1,2-diacyl-sn-glycero-3-phospho-(1D-myo-inositol) + ATP = a 1,2-diacyl-sn-glycero-3-phospho-(1D-myo-inositol 4-phosphate) + ADP + H(+). In terms of biological role, may play a role in endocytic and/or exocytic pathways. The sequence is that of Phosphatidylinositol 4-kinase lsb6 (lsb6) from Schizosaccharomyces pombe (strain 972 / ATCC 24843) (Fission yeast).